The primary structure comprises 621 residues: MNLKFYNLIFFISFLICCIHGQRYLPVEGGKCEKYIGDGDSGKRICNGYLANPDSVYVHNKTQQETLKDLRSLINLLELNNPSKECINPSNYKIMCAMMFPECIEINGTNIVKPITLPIYTCNSFCKEALVTCSVPNTIASCDGGTNLPIQLPYTPIEWVKYNLTIYGGVDDYRVNCTDPTLISDSGSSSEIEVGCVEPLIKRPTNDTKGDLEKGYFYVNSQCVINCPVTGMHPKSVWNQIFKINDVLSSISLACTLILLFTFGILNPKLNRFDKKNLFFIAGVFGMSVSGVLIAANGSEKTVCPTPERYAVNTDRVCVASGFLVHFSALFAILWWTIGLADVYYGIKFVGKKIKIKVRYYLLATLTISLAFTLVPLGTGQYQAGLSNVMCFLKDEIYQSMTFFVPLGICLTMGTILMILVMREIYVIVKSNSTSSSFSSSSSKSKSKSKSSDSISYLKLQVKPMLNIILFYFTFLYLFLFVRVINSRYQEYEDSAIPYMLCLAKGGGDSCRLKGPSAGSLGYFAYCLRIYGIYLFIISFLSSRTIKIWKESIILNNAFVTPIIKFIDSSFSNRFSSSKNTSTTQNSTLNNTESDTSKRGNSSAVSINLESRNYNTDDDDL.

A signal peptide spans 1-21 (MNLKFYNLIFFISFLICCIHG). Over 22 to 246 (QRYLPVEGGK…VWNQIFKIND (225 aa)) the chain is Extracellular. Residues 27-166 (VEGGKCEKYI…IEWVKYNLTI (140 aa)) enclose the FZ domain. Cystine bridges form between Cys-32–Cys-103 and Cys-46–Cys-96. Residues Asn-60, Asn-107, Asn-163, Asn-176, and Asn-206 are each glycosylated (N-linked (GlcNAc...) asparagine). A helical transmembrane segment spans residues 247–267 (VLSSISLACTLILLFTFGILN). The Cytoplasmic segment spans residues 268–277 (PKLNRFDKKN). Residues 278-298 (LFFIAGVFGMSVSGVLIAANG) traverse the membrane as a helical segment. The Extracellular portion of the chain corresponds to 299–318 (SEKTVCPTPERYAVNTDRVC). The helical transmembrane segment at 319 to 339 (VASGFLVHFSALFAILWWTIG) threads the bilayer. At 340–359 (LADVYYGIKFVGKKIKIKVR) the chain is on the cytoplasmic side. The helical transmembrane segment at 360–380 (YYLLATLTISLAFTLVPLGTG) threads the bilayer. At 381–400 (QYQAGLSNVMCFLKDEIYQS) the chain is on the extracellular side. Residues 401 to 421 (MTFFVPLGICLTMGTILMILV) form a helical membrane-spanning segment. The Cytoplasmic portion of the chain corresponds to 422–464 (MREIYVIVKSNSTSSSFSSSSSKSKSKSKSSDSISYLKLQVKP). Residues 465–485 (MLNIILFYFTFLYLFLFVRVI) form a helical membrane-spanning segment. At 486–520 (NSRYQEYEDSAIPYMLCLAKGGGDSCRLKGPSAGS) the chain is on the extracellular side. A helical membrane pass occupies residues 521-541 (LGYFAYCLRIYGIYLFIISFL). At 542–621 (SSRTIKIWKE…RNYNTDDDDL (80 aa)) the chain is on the cytoplasmic side. Positions 575-594 (FSSSKNTSTTQNSTLNNTES) are enriched in low complexity. A disordered region spans residues 575–603 (FSSSKNTSTTQNSTLNNTESDTSKRGNSS).

The protein belongs to the G-protein coupled receptor Fz/Smo family.

It is found in the membrane. The polypeptide is Frizzled and smoothened-like protein H (fslH) (Dictyostelium discoideum (Social amoeba)).